The chain runs to 298 residues: Ethanolamine ammonia-lyase small subunit (298 aa).

The interval 1 to 19 (MDQKQIEEIVRSVMASMGQ) is targets protein to the BMC. Residues V210, E231, and C261 each coordinate adenosylcob(III)alamin.

This sequence belongs to the EutC family. In terms of assembly, the basic unit is a heterodimer which dimerizes to form tetramers. The heterotetramers trimerize; 6 large subunits form a core ring with 6 small subunits projecting outwards. Interacts with EutS, which targets it to the interior of the BMC. It depends on adenosylcob(III)alamin as a cofactor.

The protein resides in the bacterial microcompartment. The enzyme catalyses ethanolamine = acetaldehyde + NH4(+). It participates in amine and polyamine degradation; ethanolamine degradation. Catalyzes the deamination of various vicinal amino-alcohols to oxo compounds. It is spontaneously inactivated by its substrate and reactivated by EutA. May play a role in bacterial microcompartment (BMC) assembly or maintenance. Directly targeted to the BMC. Functionally, expression of the eut operon allows this bacteria to use ethanolamine (EA) as a carbon, nitrogen and energy source. It relies on cobalamin (vitamin B12) both as a cofactor for the ethanolamine ammonia-lyase activity and to induce the operon. EA enhances bacterial survival in macrophages in a concentration-dependent manner, suggesting it is an important nutrient during infection. The polypeptide is Ethanolamine ammonia-lyase small subunit (Salmonella typhimurium (strain LT2 / SGSC1412 / ATCC 700720)).